The chain runs to 124 residues: Small ribosomal subunit protein uS12 (124 aa).

A 3-methylthioaspartic acid modification is found at Asp-89. Residues 103–124 (DTAGVQKRRQGRSKYGAKRPKS) are disordered. The segment covering 108–124 (QKRRQGRSKYGAKRPKS) has biased composition (basic residues).

Belongs to the universal ribosomal protein uS12 family. Part of the 30S ribosomal subunit. Contacts proteins S8 and S17. May interact with IF1 in the 30S initiation complex.

In terms of biological role, with S4 and S5 plays an important role in translational accuracy. Its function is as follows. Interacts with and stabilizes bases of the 16S rRNA that are involved in tRNA selection in the A site and with the mRNA backbone. Located at the interface of the 30S and 50S subunits, it traverses the body of the 30S subunit contacting proteins on the other side and probably holding the rRNA structure together. The combined cluster of proteins S8, S12 and S17 appears to hold together the shoulder and platform of the 30S subunit. This Methylococcus capsulatus (strain ATCC 33009 / NCIMB 11132 / Bath) protein is Small ribosomal subunit protein uS12.